The chain runs to 311 residues: Probable hydrogen peroxide-inducible genes activator (311 aa).

Positions 8–65 (PTIAGLRAFVAVVEKGHFSAAASFLGVRQSTLSQALAALESGLGVQLIERSTRRVFVT) constitute an HTH lysR-type domain. A DNA-binding region (H-T-H motif) is located at residues 25 to 44 (FSAAASFLGVRQSTLSQALA).

This sequence belongs to the LysR transcriptional regulatory family.

In terms of biological role, required for the induction the katG gene for catalase. Involved in the response to hydrogen peroxide. This chain is Probable hydrogen peroxide-inducible genes activator (oxyR), found in Mycobacterium leprae (strain TN).